The chain runs to 305 residues: Mitogen-activated protein kinase kinase 10 (305 aa).

A Phosphoserine modification is found at Ser-34. A Protein kinase domain is found at 48–302 (LEKLSVLGQG…VEELLRHSFV (255 aa)). Residues 54 to 62 (LGQGSGGTV) and Lys-77 each bind ATP. The active-site Proton acceptor is the Asp-165. Thr-200 carries the post-translational modification Phosphothreonine.

Belongs to the protein kinase superfamily. STE Ser/Thr protein kinase family. MAP kinase kinase subfamily. Interacts with P.syringae type III effector HopF2.

The enzyme catalyses L-seryl-[protein] + ATP = O-phospho-L-seryl-[protein] + ADP + H(+). It carries out the reaction L-threonyl-[protein] + ATP = O-phospho-L-threonyl-[protein] + ADP + H(+). It catalyses the reaction L-tyrosyl-[protein] + ATP = O-phospho-L-tyrosyl-[protein] + ADP + H(+). This chain is Mitogen-activated protein kinase kinase 10 (MKK10), found in Arabidopsis thaliana (Mouse-ear cress).